A 249-amino-acid polypeptide reads, in one-letter code: Putative SAP domain-containing protein 049L (249 aa).

Basic and acidic residues-rich tracts occupy residues 1 to 12 (MAAPKAEGEDKP), 22 to 38 (PKPE…KEFC), and 95 to 107 (KKAE…KLDE). Residues 1–110 (MAAPKAEGED…DDKKLDEATG (110 aa)) form a disordered region. In terms of domain architecture, SAP spans 119 to 153 (LSKLTIQTLKGMCKTRNLKISGNKAALVQRLIEAD).

The chain is Putative SAP domain-containing protein 049L from Frog virus 3 (isolate Goorha) (FV-3).